The chain runs to 1674 residues: Maestro heat-like repeat-containing protein family member 2A (1674 aa).

A disordered region spans residues 1-26; sequence MTEAITEAAVASSEEVSEERDDLGPL. HEAT repeat units follow at residues 73-96, 97-133, 195-234, 254-292, 382-419, 424-461, 573-612, 615-641, 642-679, 739-776, 993-1030, 1221-1263, 1381-1420, and 1627-1674; these read ATTE…ISTQ, RKVN…EMRE, MPYM…TVQF, LKVF…LLLP, SYPK…ADEP, RAIY…CGYQ, PAPQ…SIAP, ADMW…DQKA, WEDK…SFDS, KTVL…ETVK, GQFG…LHAS, DPLM…SHRP, EKLL…GAPK, and LDFP…QGMS.

This chain is Maestro heat-like repeat-containing protein family member 2A (MROH2A), found in Homo sapiens (Human).